Consider the following 314-residue polypeptide: Methionyl-tRNA formyltransferase (314 aa).

113 to 116 (SLLP) serves as a coordination point for (6S)-5,6,7,8-tetrahydrofolate.

The protein belongs to the Fmt family.

The enzyme catalyses L-methionyl-tRNA(fMet) + (6R)-10-formyltetrahydrofolate = N-formyl-L-methionyl-tRNA(fMet) + (6S)-5,6,7,8-tetrahydrofolate + H(+). In terms of biological role, attaches a formyl group to the free amino group of methionyl-tRNA(fMet). The formyl group appears to play a dual role in the initiator identity of N-formylmethionyl-tRNA by promoting its recognition by IF2 and preventing the misappropriation of this tRNA by the elongation apparatus. The chain is Methionyl-tRNA formyltransferase from Pseudomonas aeruginosa (strain ATCC 15692 / DSM 22644 / CIP 104116 / JCM 14847 / LMG 12228 / 1C / PRS 101 / PAO1).